Here is a 462-residue protein sequence, read N- to C-terminus: A-type ATP synthase subunit B (462 aa).

Belongs to the ATPase alpha/beta chains family. Has multiple subunits with at least A(3), B(3), C, D, E, F, H, I and proteolipid K(x).

It is found in the cell membrane. Functionally, component of the A-type ATP synthase that produces ATP from ADP in the presence of a proton gradient across the membrane. The B chain is a regulatory subunit. This Pyrococcus abyssi (strain GE5 / Orsay) protein is A-type ATP synthase subunit B.